A 200-amino-acid polypeptide reads, in one-letter code: MSRWAGIVLAGGMSSRFGEPKALASWQGSTFIEHILKEMTSALQEVVVISHSDIKERVEQFVQVPVIEDIPHYKGNGPLAGIVSGMEYIEADWYAIMPCDAPNVSHEWFTILLEQTSNEYDAVVPIINGRKQPLFAAYHNRVKEKIYALLQEEKRSMGQLLSQCNVKYVAGEDVQANTDWFINVNTKEEYVQAQKDLSNE.

Residues 9–11, K21, D69, and D100 contribute to the GTP site; that span reads LAG. Mg(2+) is bound at residue D100.

This sequence belongs to the MobA family. Requires Mg(2+) as cofactor.

The protein localises to the cytoplasm. The catalysed reaction is Mo-molybdopterin + GTP + H(+) = Mo-molybdopterin guanine dinucleotide + diphosphate. Transfers a GMP moiety from GTP to Mo-molybdopterin (Mo-MPT) cofactor (Moco or molybdenum cofactor) to form Mo-molybdopterin guanine dinucleotide (Mo-MGD) cofactor. This is Probable molybdenum cofactor guanylyltransferase from Bacillus cereus (strain G9842).